A 144-amino-acid chain; its full sequence is Large ribosomal subunit protein uL13 (144 aa).

The protein belongs to the universal ribosomal protein uL13 family. Part of the 50S ribosomal subunit.

In terms of biological role, this protein is one of the early assembly proteins of the 50S ribosomal subunit, although it is not seen to bind rRNA by itself. It is important during the early stages of 50S assembly. This is Large ribosomal subunit protein uL13 from Nitrosomonas europaea (strain ATCC 19718 / CIP 103999 / KCTC 2705 / NBRC 14298).